The following is a 394-amino-acid chain: 1-acylglycerol-3-phosphate O-acyltransferase ICT1 (394 aa).

The region spanning 74–381 (VLIHGYAASS…AGHNLFLDNP (308 aa)) is the AB hydrolase-1 domain. The HXXXXD motif signature appears at 374 to 379 (HNLFLD).

Belongs to the peptidase S33 family. ABHD4/ABHD5 subfamily.

The catalysed reaction is a 1-acyl-sn-glycero-3-phosphate + an acyl-CoA = a 1,2-diacyl-sn-glycero-3-phosphate + CoA. In terms of biological role, lysophosphatidic acid acyltransferase involved in membrane remodeling leading to increased organic solvent tolerance. Involved in resistance to azoles and copper. This is 1-acylglycerol-3-phosphate O-acyltransferase ICT1 (ICT1) from Saccharomyces cerevisiae (strain ATCC 204508 / S288c) (Baker's yeast).